A 466-amino-acid polypeptide reads, in one-letter code: Asparagine--tRNA ligase (466 aa).

Belongs to the class-II aminoacyl-tRNA synthetase family. In terms of assembly, homodimer.

It localises to the cytoplasm. It catalyses the reaction tRNA(Asn) + L-asparagine + ATP = L-asparaginyl-tRNA(Asn) + AMP + diphosphate + H(+). The polypeptide is Asparagine--tRNA ligase (Shewanella baltica (strain OS195)).